The primary structure comprises 147 residues: Nudix hydrolase 1 (147 aa).

S2 is modified (N-acetylserine). The 134-residue stretch at 7-140 (IPRVAVVVFI…EKLFGSGFNP (134 aa)) folds into the Nudix hydrolase domain. Positions 41-62 (GHLEFGESFEECAAREVMEETG) match the Nudix box motif. Mg(2+) is bound by residues E56 and E60.

It belongs to the Nudix hydrolase family. In terms of assembly, homodimer. It depends on Mg(2+) as a cofactor. Requires Mn(2+) as cofactor. In terms of tissue distribution, expressed in roots, stems and leaves.

It is found in the cytoplasm. It carries out the reaction 7,8-dihydroneopterin 3'-triphosphate + H2O = 7,8-dihydroneopterin 3'-phosphate + diphosphate + H(+). The enzyme catalyses NAD(+) + H2O = beta-nicotinamide D-ribonucleotide + AMP + 2 H(+). The catalysed reaction is NADH + H2O = reduced beta-nicotinamide D-ribonucleotide + AMP + 2 H(+). It catalyses the reaction 8-oxo-dGTP + H2O = 8-oxo-dGMP + diphosphate + H(+). Mediates the hydrolysis of some nucleoside diphosphate derivatives. Its substrate specificity is unclear. In vitro, it can use NTP, dNTP, 8-oxo-GTP, 8-oxo-dGTP, dGTP, dATP, dTTP or dihydroneopterin triphosphate (DHNTP) as substrate. Has some NADH pyrophosphatase activity in vitro; however, such activity may not be relevant in vivo due to the high concentration of manganese used during the experiments. Plays an important role in protection against oxidative DNA and RNA damage by removing oxidatively damaged form of guanine. The protein is Nudix hydrolase 1 (NUDT1) of Arabidopsis thaliana (Mouse-ear cress).